The following is a 186-amino-acid chain: ADP-ribosylation factor-like protein 6 (186 aa).

Residue glycine 2 is the site of N-myristoyl glycine attachment. Residues 24 to 31, 69 to 73, and 130 to 133 contribute to the GTP site; these read GLDNSGKT, DMSGQ, and NKMD.

The protein belongs to the small GTPase superfamily. Arf family. Interacts with SEC61B, ARL6IP1, ARL6IP2, ARL6IP3, ARL6IP4 ARL6IP5 and ARL6IP6. Interacts (GTP-bound form) with the BBSome a complex that contains BBS1, BBS2, BBS4, BBS5, BBS7, BBS8/TTC8, BBS9 and BBIP10. Interacts (GTP-free form) with IFT27.

The protein resides in the cell projection. Its subcellular location is the cilium membrane. The protein localises to the cytoplasm. It localises to the cytoskeleton. It is found in the cilium axoneme. The protein resides in the cilium basal body. Functionally, involved in membrane protein trafficking at the base of the ciliary organelle. Mediates recruitment onto plasma membrane of the BBSome complex which would constitute a coat complex required for sorting of specific membrane proteins to the primary cilia. Together with the BBSome complex and LTZL1, controls SMO ciliary trafficking and contributes to the sonic hedgehog (SHH) pathway regulation. May regulate cilia assembly and disassembly and subsequent ciliary signaling events such as the Wnt signaling cascade. Isoform 2 may be required for proper retinal function and organization. This is ADP-ribosylation factor-like protein 6 (ARL6) from Bos taurus (Bovine).